The following is a 1230-amino-acid chain: Potassium channel subfamily T member 1 (1230 aa).

The segment at 1 to 37 is disordered; that stretch reads MARAKLPRSPSEGKAGPGGAPAGAAAPEEPHGLSPLL. The Cytoplasmic segment spans residues 1–93; sequence MARAKLPRSP…LFFIKNQRSS (93 aa). The chain crosses the membrane as a helical span at residues 94–126; it reads LRIRLFNFSLKLLTCLLYIVRVLLDDPALGIGC. The Extracellular portion of the chain corresponds to 127-153; sequence WGCPKQNYSFNDSSSEINWAPILWVER. Asn133 and Asn137 each carry an N-linked (GlcNAc...) asparagine glycan. The helical transmembrane segment at 154 to 178 threads the bilayer; it reads KMTLWAIQVIVAIISFLETMLLIYL. The Cytoplasmic portion of the chain corresponds to 179 to 192; it reads SYKGNIWEQIFRVS. A helical membrane pass occupies residues 193–208; sequence FVLEMINTLPFIITIF. The Extracellular segment spans residues 209-215; sequence WPPLRNL. The chain crosses the membrane as a helical span at residues 216-233; the sequence is FIPVFLNCWLAKHALENM. Over 234–246 the chain is Cytoplasmic; the sequence is INDFHRAILRTQS. Residues 247-274 form a helical membrane-spanning segment; it reads AMFNQVLILFCTLLCLVFTGTCGIQHLE. At 275–281 the chain is on the extracellular side; that stretch reads RAGENLS. An intramembrane region (pore-forming) is located at residues 282 to 302; the sequence is LLTSFYFCIVTFSTVGYGDVT. K(+)-binding residues include Val296 and Gly297. The Extracellular segment spans residues 303–304; that stretch reads PK. A helical transmembrane segment spans residues 305–338; it reads IWPSQLLVVIMICVALVVLPLQFEELVYLWMERQ. Topologically, residues 339–1230 are cytoplasmic; it reads KSGGNYSRHR…NPETRDETQL (892 aa). The RCK N-terminal 1 domain occupies 352 to 488; it reads EKHVVLCVSS…FHVKFADHVV (137 aa). 4 residues coordinate Na(+): Leu513, His516, Ser538, and Asn540. Residues 660 to 689 form a disordered region; it reads TEHRPTQSGGGGGGSKLALPTENGSGSRRP. Zn(2+)-binding residues include Cys758 and Cys759. K(+) is bound by residues Arg761 and Lys764. Arg761 and Lys764 together coordinate Na(+). Positions 766 and 768 each coordinate Zn(2+). K(+) contacts are provided by Asn769, Tyr771, Tyr777, and Gly778. Tyr771 serves as a coordination point for Na(+). Phe779 contacts Na(+). Residues 781–921 form the RCK N-terminal 2 domain; it reads NKLIIVSAET…QFRAKDSYSL (141 aa). K(+)-binding residues include Ser787, Leu818, Asp820, Gly842, and Asp865. Disordered stretches follow at residues 1048-1078 and 1204-1230; these read EVKG…EHPL and SSSQ…ETQL. Gly residues predominate over residues 1057–1072; sequence AGTGGSSQGRHTGGGD. The segment covering 1204–1219 has biased composition (low complexity); the sequence is SSSQSRKSSCSHKLSS.

The protein belongs to the potassium channel family. Calcium-activated (TC 1.A.1.3) subfamily. KCa4.1/KCNT1 sub-subfamily. Homotetramer; which constitutes the Na(+)-activated K(+) channel. Interacts with KCNT2; these heterodimer channels differ from the homomers in their unitary conductance, kinetic behavior, subcellular localization, and response to activation of protein kinase C. Interacts (via C-terminus) with FMR1; this interaction alters gating properties of KCNT1. Interacts with CRBN via its cytoplasmic C-terminus. Post-translationally, phosphorylated by protein kinase C. Phosphorylation of the C-terminal domain increases channel activity. In terms of tissue distribution, highest expression in liver, brain and spinal cord. Lowest expression in skeletal muscle.

The protein localises to the cell membrane. The enzyme catalyses K(+)(in) = K(+)(out). Its activity is regulated as follows. Activated by high intracellular Na(+). In addition to activation by Na(+), is cooperatively activated by intracellular Cl(-) levels. Inhibited by Zn(2+). Activated upon stimulation of G-protein coupled receptors, such as CHRM1 and GRIA1. In terms of biological role, sodium-activated K(+) channel. Acts as an important mediator of neuronal membrane excitability. Contributes to the delayed outward currents. Regulates neuronal bursting in sensory neurons. Contributes to synaptic development and plasticity. The polypeptide is Potassium channel subfamily T member 1 (Homo sapiens (Human)).